Consider the following 305-residue polypeptide: Aurasperone B biosynthesis cluster protein A (305 aa).

The first 26 residues, 1-26 (MSIFFSIRFWPAAISAAILWLPQVLG), serve as a signal peptide directing secretion. Residues asparagine 29, asparagine 34, asparagine 64, asparagine 83, asparagine 132, asparagine 183, asparagine 218, and asparagine 288 are each glycosylated (N-linked (GlcNAc...) asparagine).

This sequence belongs to the bfoA family.

Part of the gene cluster that mediates the biosynthesis of aurasperone B, a dimeric gamma-naphthopyrone. The first step in the biosynthesis of aurasperone B is the production of gamma-naphthopyrone precursor YWA1 by the non-reducing polyketide synthase albA, via condensation of one acetyl-CoA starter unit with 6 malonyl-CoA units. YWA1 is then methylated by aunE at position C-6 to yield foncesin which is further methylated at position C-8 by aunD to produce fonsecin B. A key enzyme in the biosynthetic pathway is the cytochrome P450 monooxygenase aunB which catalyzes the oxidative dimerization of fonsecin B to aurasperone B. AunB also catalyzes the oxidative dimerization of rubrofusarin B into aurasperone A. The chain is Aurasperone B biosynthesis cluster protein A from Aspergillus niger (strain ATCC MYA-4892 / CBS 513.88 / FGSC A1513).